The primary structure comprises 200 residues: Probable GTP-binding protein EngB (200 aa).

Positions 22–197 constitute an EngB-type G domain; the sequence is NLPEYAFIGR…LDYIDSINRS (176 aa). Residues 30-37, 57-61, 75-78, 142-145, and 173-178 contribute to the GTP site; these read GRSNVGKS, GKTLL, DLPG, TKAD, and HFVSSS. 2 residues coordinate Mg(2+): serine 37 and threonine 59.

Belongs to the TRAFAC class TrmE-Era-EngA-EngB-Septin-like GTPase superfamily. EngB GTPase family. Requires Mg(2+) as cofactor.

In terms of biological role, necessary for normal cell division and for the maintenance of normal septation. In Phocaeicola vulgatus (strain ATCC 8482 / DSM 1447 / JCM 5826 / CCUG 4940 / NBRC 14291 / NCTC 11154) (Bacteroides vulgatus), this protein is Probable GTP-binding protein EngB.